The chain runs to 91 residues: Small ribosomal subunit protein uS19 (91 aa).

The protein belongs to the universal ribosomal protein uS19 family.

In terms of biological role, protein S19 forms a complex with S13 that binds strongly to the 16S ribosomal RNA. The polypeptide is Small ribosomal subunit protein uS19 (Pseudomonas syringae pv. syringae (strain B728a)).